Reading from the N-terminus, the 524-residue chain is Solute carrier family 2, facilitated glucose transporter member 2 (524 aa).

The Cytoplasmic segment spans residues 1 to 6 (MTEDKI). The helical transmembrane segment at 7-26 (TGTLVFAVLTAVLGSFQFGY) threads the bilayer. Topologically, residues 27–89 (DIGVINAPQQ…SWAEEETTAS (63 aa)) are extracellular. A glycan (N-linked (GlcNAc...) asparagine) is linked at Asn62. A helical membrane pass occupies residues 90–115 (ASLIIMLWSLSVSIFAIGGMIASFFG). Over 116–126 (GMLGDRLGRIK) the chain is Cytoplasmic. A helical membrane pass occupies residues 127-145 (AMLVANILSLVGALLMWFS). Topologically, residues 146–150 (KLGPS) are extracellular. A helical transmembrane segment spans residues 151-176 (HILIISGRGISGLYCGLISGLVPMYI). Over 177–187 (GEIAPTKFRGA) the chain is Cytoplasmic. The helical transmembrane segment at 188–211 (IGALHQLAIVTGILVSQIIGLDFL) threads the bilayer. Position 193 (Gln193) interacts with D-glucose. Topologically, residues 212-216 (LGNHE) are extracellular. Residues 217–239 (LWHILLGLSAVPAVLQSLMLFFC) traverse the membrane as a helical segment. At 240–303 (PESPRYLYIK…LFTNSSYRQP (64 aa)) the chain is on the cytoplasmic side. Residues 304-327 (ILVALMLHMAQQFSGINGIFYYST) traverse the membrane as a helical segment. D-glucose-binding positions include 314-315 (QQ) and Asn320. Over 328–338 (SIFQTAGISQP) the chain is Extracellular. A helical membrane pass occupies residues 339-360 (VYATIGVGAINTIFTALSVFLV). Asn349 contributes to the D-glucose binding site. Residues 361-366 (EKAGRR) lie on the Cytoplasmic side of the membrane. A helical membrane pass occupies residues 367–389 (SLFLIGMSGMFVCAIFMSVGLVL). At 390–394 (LDKLP) the chain is on the extracellular side. Residues 395-413 (WMSYVSMTAIFLFVSFFEI) form a helical membrane-spanning segment. D-glucose contacts are provided by Glu412 and Trp420. Residues 414-433 (GPGPIPWFMVAEFFSQGPRP) are Cytoplasmic-facing. The chain crosses the membrane as a helical span at residues 434–458 (AALAMAAFSNWTCNFIIALCFQYIA). The Extracellular segment spans residues 459-463 (DFCGP). The chain crosses the membrane as a helical span at residues 464 to 482 (YVFFLFAGVVLVFTLFTFF). The Cytoplasmic portion of the chain corresponds to 483–524 (KVPETKGKSFEEIAAEFQKKSGSAQSPKAAVEMEFLGATETV). A Phosphothreonine modification is found at Thr523.

Belongs to the major facilitator superfamily. Sugar transporter (TC 2.A.1.1) family. Glucose transporter subfamily. In terms of processing, N-glycosylated; required for stability and retention at the cell surface of pancreatic beta cells.

Its subcellular location is the cell membrane. The catalysed reaction is D-glucose(out) = D-glucose(in). It catalyses the reaction D-fructose(out) = D-fructose(in). It carries out the reaction L-dehydroascorbate(out) = L-dehydroascorbate(in). The enzyme catalyses D-galactose(in) = D-galactose(out). D-glucose and maltose competitively inhibit fructose transport. D-glucose, D-fructose and maltose inhibit deoxyglucose transport. Functionally, facilitative hexose transporter that mediates the transport of glucose, fructose and galactose. Likely mediates the bidirectional transfer of glucose across the plasma membrane of hepatocytes and is responsible for uptake of glucose by the beta cells; may comprise part of the glucose-sensing mechanism of the beta cell. May also participate with the Na(+)/glucose cotransporter in the transcellular transport of glucose in the small intestine and kidney. Also able to mediate the transport of dehydroascorbate. In Sus scrofa (Pig), this protein is Solute carrier family 2, facilitated glucose transporter member 2.